The following is a 98-amino-acid chain: uncharacterized protein (98 aa).

This sequence belongs to the HesB/IscA family.

This is an uncharacterized protein from Staphylococcus epidermidis (strain ATCC 35984 / DSM 28319 / BCRC 17069 / CCUG 31568 / BM 3577 / RP62A).